Consider the following 470-residue polypeptide: Ribosomal protein uS12 methylthiotransferase RimO (470 aa).

Positions 1–27 (MPCQAPHSDSNVKNPSEATNQKDHSPR) are disordered. The segment covering 7–19 (HSDSNVKNPSEAT) has biased composition (polar residues). One can recognise an MTTase N-terminal domain in the interval 26–141 (PRVGFVSLGC…VMQAVHTHLP (116 aa)). [4Fe-4S] cluster-binding residues include cysteine 35, cysteine 71, cysteine 100, cysteine 172, cysteine 176, and cysteine 179. In terms of domain architecture, Radical SAM core spans 158-399 (LTPKHYAYLK…MEVAEAVSAR (242 aa)). The 69-residue stretch at 402–470 (QRKVGQTLRV…ADGHDLWGEV (69 aa)) folds into the TRAM domain.

Belongs to the methylthiotransferase family. RimO subfamily. Requires [4Fe-4S] cluster as cofactor.

The protein resides in the cytoplasm. It carries out the reaction L-aspartate(89)-[ribosomal protein uS12]-hydrogen + (sulfur carrier)-SH + AH2 + 2 S-adenosyl-L-methionine = 3-methylsulfanyl-L-aspartate(89)-[ribosomal protein uS12]-hydrogen + (sulfur carrier)-H + 5'-deoxyadenosine + L-methionine + A + S-adenosyl-L-homocysteine + 2 H(+). In terms of biological role, catalyzes the methylthiolation of an aspartic acid residue of ribosomal protein uS12. This Cupriavidus taiwanensis (strain DSM 17343 / BCRC 17206 / CCUG 44338 / CIP 107171 / LMG 19424 / R1) (Ralstonia taiwanensis (strain LMG 19424)) protein is Ribosomal protein uS12 methylthiotransferase RimO.